A 173-amino-acid polypeptide reads, in one-letter code: NADH-ubiquinone oxidoreductase chain 6 (173 aa).

Transmembrane regions (helical) follow at residues 1 to 21 (MTYLVLLLGLCFVLGGLAVAS), 27 to 47 (YGVVGLVLASVAGCGWLLSLG), 48 to 68 (VSFVSLVLFMVYLGGMLVVFV), 88 to 108 (VGYGASFILVVIAGMIVGGLI), and 139 to 159 (YGVGMFLVAGWGLLLTLFVVL).

Belongs to the complex I subunit 6 family.

The protein resides in the mitochondrion membrane. The catalysed reaction is a ubiquinone + NADH + 5 H(+)(in) = a ubiquinol + NAD(+) + 4 H(+)(out). Functionally, core subunit of the mitochondrial membrane respiratory chain NADH dehydrogenase (Complex I) that is believed to belong to the minimal assembly required for catalysis. Complex I functions in the transfer of electrons from NADH to the respiratory chain. The immediate electron acceptor for the enzyme is believed to be ubiquinone. This is NADH-ubiquinone oxidoreductase chain 6 (MT-ND6) from Calidris maritima (Purple sandpiper).